A 143-amino-acid polypeptide reads, in one-letter code: uncharacterized protein (143 aa).

It to E.coli YifN.

This is an uncharacterized protein from Haemophilus influenzae (strain ATCC 51907 / DSM 11121 / KW20 / Rd).